The following is a 301-amino-acid chain: Phosphoribosylaminoimidazole-succinocarboxamide synthase (301 aa).

The protein belongs to the SAICAR synthetase family.

The enzyme catalyses 5-amino-1-(5-phospho-D-ribosyl)imidazole-4-carboxylate + L-aspartate + ATP = (2S)-2-[5-amino-1-(5-phospho-beta-D-ribosyl)imidazole-4-carboxamido]succinate + ADP + phosphate + 2 H(+). It functions in the pathway purine metabolism; IMP biosynthesis via de novo pathway; 5-amino-1-(5-phospho-D-ribosyl)imidazole-4-carboxamide from 5-amino-1-(5-phospho-D-ribosyl)imidazole-4-carboxylate: step 1/2. This Syntrophobacter fumaroxidans (strain DSM 10017 / MPOB) protein is Phosphoribosylaminoimidazole-succinocarboxamide synthase.